A 312-amino-acid chain; its full sequence is Ribosomal RNA small subunit methyltransferase H (312 aa).

S-adenosyl-L-methionine contacts are provided by residues 34 to 36 (AGH), Asp54, Phe81, Asp102, and Gln109.

This sequence belongs to the methyltransferase superfamily. RsmH family.

It localises to the cytoplasm. It carries out the reaction cytidine(1402) in 16S rRNA + S-adenosyl-L-methionine = N(4)-methylcytidine(1402) in 16S rRNA + S-adenosyl-L-homocysteine + H(+). Functionally, specifically methylates the N4 position of cytidine in position 1402 (C1402) of 16S rRNA. This Geobacter sp. (strain M21) protein is Ribosomal RNA small subunit methyltransferase H.